The following is a 300-amino-acid chain: Regulatory protein NocR (300 aa).

In terms of domain architecture, HTH lysR-type spans 1 to 59 (MIQSRQLEAFRAVMLTGGMTSAANLVRITQPAISRLIRDLEEEIGISLFERTGNRLRPT). A DNA-binding region (H-T-H motif) is located at residues 19-38 (MTSAANLVRITQPAISRLIR).

This sequence belongs to the LysR transcriptional regulatory family.

Its function is as follows. Positive regulatory protein for the noc operon involved in nopaline catabolism and uptake. In Agrobacterium fabrum (strain C58 / ATCC 33970) (Agrobacterium tumefaciens (strain C58)), this protein is Regulatory protein NocR (nocR).